We begin with the raw amino-acid sequence, 294 residues long: tRNA dimethylallyltransferase (294 aa).

Residue 10–17 coordinates ATP; that stretch reads GPTAVGKT. Residue 12 to 17 participates in substrate binding; it reads TAVGKT. Positions 35–38 are interaction with substrate tRNA; it reads DSQQ.

Belongs to the IPP transferase family. In terms of assembly, monomer. Mg(2+) is required as a cofactor.

It catalyses the reaction adenosine(37) in tRNA + dimethylallyl diphosphate = N(6)-dimethylallyladenosine(37) in tRNA + diphosphate. Catalyzes the transfer of a dimethylallyl group onto the adenine at position 37 in tRNAs that read codons beginning with uridine, leading to the formation of N6-(dimethylallyl)adenosine (i(6)A). In Streptococcus sanguinis (strain SK36), this protein is tRNA dimethylallyltransferase.